The primary structure comprises 338 residues: Phenylalanine--tRNA ligase alpha subunit (338 aa).

E252 contacts Mg(2+).

Belongs to the class-II aminoacyl-tRNA synthetase family. Phe-tRNA synthetase alpha subunit type 1 subfamily. As to quaternary structure, tetramer of two alpha and two beta subunits. The cofactor is Mg(2+).

The protein resides in the cytoplasm. The enzyme catalyses tRNA(Phe) + L-phenylalanine + ATP = L-phenylalanyl-tRNA(Phe) + AMP + diphosphate + H(+). This chain is Phenylalanine--tRNA ligase alpha subunit, found in Pseudomonas syringae pv. syringae (strain B728a).